Reading from the N-terminus, the 457-residue chain is Chromosomal replication initiator protein DnaA (457 aa).

Residues 1-73 (MANNYQTLYD…SKYLSEEFKK (73 aa)) form a domain I, interacts with DnaA modulators region. The interval 73–108 (KENIVNFEFIIDNEKLLINSNFLIKETNIKNRFNFS) is domain II. Residues 109–331 (DELLRYNFNN…GNLKQICFWA (223 aa)) form a domain III, AAA+ region region. 4 residues coordinate ATP: Gly-156, Gly-158, Lys-159, and Thr-160. The domain IV, binds dsDNA stretch occupies residues 332 to 457 (DNDTNKDLII…LQINLIINKF (126 aa)).

Belongs to the DnaA family. As to quaternary structure, oligomerizes as a right-handed, spiral filament on DNA at oriC.

The protein resides in the cytoplasm. In terms of biological role, plays an essential role in the initiation and regulation of chromosomal replication. ATP-DnaA binds to the origin of replication (oriC) to initiate formation of the DNA replication initiation complex once per cell cycle. Binds the DnaA box (a 9 base pair repeat at the origin) and separates the double-stranded (ds)DNA. Forms a right-handed helical filament on oriC DNA; dsDNA binds to the exterior of the filament while single-stranded (ss)DNA is stabiized in the filament's interior. The ATP-DnaA-oriC complex binds and stabilizes one strand of the AT-rich DNA unwinding element (DUE), permitting loading of DNA polymerase. After initiation quickly degrades to an ADP-DnaA complex that is not apt for DNA replication. Binds acidic phospholipids. The sequence is that of Chromosomal replication initiator protein DnaA from Ureaplasma parvum serovar 3 (strain ATCC 700970).